Reading from the N-terminus, the 192-residue chain is Fe/S biogenesis protein NfuA (192 aa).

2 residues coordinate [4Fe-4S] cluster: cysteine 149 and cysteine 152.

This sequence belongs to the NfuA family. As to quaternary structure, homodimer. It depends on [4Fe-4S] cluster as a cofactor.

In terms of biological role, involved in iron-sulfur cluster biogenesis. Binds a 4Fe-4S cluster, can transfer this cluster to apoproteins, and thereby intervenes in the maturation of Fe/S proteins. Could also act as a scaffold/chaperone for damaged Fe/S proteins. The sequence is that of Fe/S biogenesis protein NfuA from Shewanella piezotolerans (strain WP3 / JCM 13877).